The sequence spans 379 residues: Chaperone protein DnaJ (379 aa).

The region spanning 5–70 is the J domain; sequence DYYELLEVSR…QKRAAYDQFG (66 aa). The CR-type zinc finger occupies 135–213; sequence GKEVEITVPR…CHGQGRVRES (79 aa). Positions 148, 151, 165, 168, 187, 190, 201, and 204 each coordinate Zn(2+). 4 CXXCXGXG motif repeats span residues 148–155, 165–172, 187–194, and 201–208; these read CTVCEGSG, CETCQGMG, CPTCHGEG, and CASCHGQG.

It belongs to the DnaJ family. As to quaternary structure, homodimer. Requires Zn(2+) as cofactor.

It localises to the cytoplasm. In terms of biological role, participates actively in the response to hyperosmotic and heat shock by preventing the aggregation of stress-denatured proteins and by disaggregating proteins, also in an autonomous, DnaK-independent fashion. Unfolded proteins bind initially to DnaJ; upon interaction with the DnaJ-bound protein, DnaK hydrolyzes its bound ATP, resulting in the formation of a stable complex. GrpE releases ADP from DnaK; ATP binding to DnaK triggers the release of the substrate protein, thus completing the reaction cycle. Several rounds of ATP-dependent interactions between DnaJ, DnaK and GrpE are required for fully efficient folding. Also involved, together with DnaK and GrpE, in the DNA replication of plasmids through activation of initiation proteins. The polypeptide is Chaperone protein DnaJ (Legionella pneumophila (strain Lens)).